Here is a 539-residue protein sequence, read N- to C-terminus: CTP synthase (539 aa).

Residues 1 to 269 (MSATKYIFVT…DERVLSKLKL (269 aa)) are amidoligase domain. Residue Ser15 participates in CTP binding. Position 15 (Ser15) interacts with UTP. 16-21 (SLGKGI) is a binding site for ATP. Tyr56 lines the L-glutamine pocket. Asp73 contributes to the ATP binding site. Mg(2+)-binding residues include Asp73 and Glu143. CTP-binding positions include 150-152 (DIE), 190-195 (KTKPTQ), and Lys226. Residues 190–195 (KTKPTQ) and Lys226 each bind UTP. Residues 295–537 (NIALVGKYVE…VKAANDFAKG (243 aa)) enclose the Glutamine amidotransferase type-1 domain. Gly357 lines the L-glutamine pocket. The active-site Nucleophile; for glutamine hydrolysis is Cys384. Residues 385–388 (LGMQ), Glu408, and Arg465 each bind L-glutamine. Catalysis depends on residues His510 and Glu512.

It belongs to the CTP synthase family. Homotetramer.

It catalyses the reaction UTP + L-glutamine + ATP + H2O = CTP + L-glutamate + ADP + phosphate + 2 H(+). It carries out the reaction L-glutamine + H2O = L-glutamate + NH4(+). The catalysed reaction is UTP + NH4(+) + ATP = CTP + ADP + phosphate + 2 H(+). The protein operates within pyrimidine metabolism; CTP biosynthesis via de novo pathway; CTP from UDP: step 2/2. Its activity is regulated as follows. Allosterically activated by GTP, when glutamine is the substrate; GTP has no effect on the reaction when ammonia is the substrate. The allosteric effector GTP functions by stabilizing the protein conformation that binds the tetrahedral intermediate(s) formed during glutamine hydrolysis. Inhibited by the product CTP, via allosteric rather than competitive inhibition. Functionally, catalyzes the ATP-dependent amination of UTP to CTP with either L-glutamine or ammonia as the source of nitrogen. Regulates intracellular CTP levels through interactions with the four ribonucleotide triphosphates. This chain is CTP synthase, found in Cytophaga hutchinsonii (strain ATCC 33406 / DSM 1761 / CIP 103989 / NBRC 15051 / NCIMB 9469 / D465).